An 882-amino-acid chain; its full sequence is ABC transporter H family member 4 (882 aa).

The next 3 membrane-spanning stretches (helical) occupy residues 4–24 (WIKLKLTAIGWFIYGMPISVF), 35–55 (LLFKTIAVHYIIPLIIELLPW), and 79–101 (TNGPYSHSAVIKYVLLTIYYAIL). Residues 384–863 (FSYENKFSSE…NAQVYYKLLG (480 aa)) form the ABC transporter domain. Residue 418–425 (GQNRSGKS) coordinates ATP. 3 disordered regions span residues 522 to 617 (FDPD…YSTI), 634 to 669 (SMSQLNNSGGGNVNGNNNNNNNNNNNNNININNSGV), and 710 to 730 (NSGGGDESDDDDEEAERNQRS). 2 stretches are compositionally biased toward low complexity: residues 528 to 617 (IPPT…YSTI) and 647 to 667 (NGNNNNNNNNNNNNNININNS). Over residues 715 to 724 (DESDDDDEEA) the composition is skewed to acidic residues.

It belongs to the ABC transporter superfamily. ABCH family.

The protein localises to the membrane. This is ABC transporter H family member 4 (abcH4) from Dictyostelium discoideum (Social amoeba).